A 782-amino-acid polypeptide reads, in one-letter code: Coiled-coil alpha-helical rod protein 1 (782 aa).

Composition is skewed to basic and acidic residues over residues 62-74 (ERDVSSDRQEPGR) and 208-218 (ETRRAGEAKEL). Disordered stretches follow at residues 62–82 (ERDVSSDRQEPGRRGRSWGLE) and 191–218 (SSLTSKAEGLEKSLSSLETRRAGEAKEL). Coiled-coil stretches lie at residues 82–314 (EGSQ…ELTR), 344–435 (LMVQ…VVNA), and 498–691 (VADV…QQEG).

Its subcellular location is the cytoplasm. It is found in the nucleus. In terms of biological role, may be a regulator of keratinocyte proliferation or differentiation. This Pongo pygmaeus (Bornean orangutan) protein is Coiled-coil alpha-helical rod protein 1 (CCHCR1).